The sequence spans 1039 residues: Kinesin-like protein KIN-5B (1039 aa).

The 343-residue stretch at 48-390 folds into the Kinesin motor domain; the sequence is NVQVILRCKP…LDYAYRAKNI (343 aa). Residue 134–141 participates in ATP binding; that stretch reads GQTGTGKT. Residues 1008–1039 form a disordered region; sequence TLSEEHTSLEKISTKQGLGEANNRTPFLEVNK. Residues 1010–1020 are compositionally biased toward basic and acidic residues; it reads SEEHTSLEKIS.

This sequence belongs to the TRAFAC class myosin-kinesin ATPase superfamily. Kinesin family. KIN-5/BimC subfamily.

Its subcellular location is the cytoplasm. It is found in the cytoskeleton. It localises to the spindle. Its function is as follows. Responsible for microtubule translocation. May be important for the organization of phragmoplast-specific arrays of microtubules. Plays an essential role in stabilizing the mitotic spindle. Required during mitotic cytokinesis. This is Kinesin-like protein KIN-5B from Arabidopsis thaliana (Mouse-ear cress).